Here is a 178-residue protein sequence, read N- to C-terminus: Large ribosomal subunit protein eL20w (178 aa).

It belongs to the eukaryotic ribosomal protein eL20 family.

The chain is Large ribosomal subunit protein eL20w (RPL18AD) from Arabidopsis thaliana (Mouse-ear cress).